We begin with the raw amino-acid sequence, 475 residues long: Phosphoethanolamine N-methyltransferase 1 (475 aa).

Belongs to the class I-like SAM-binding methyltransferase superfamily.

The enzyme catalyses phosphoethanolamine + S-adenosyl-L-methionine = N-methylethanolamine phosphate + S-adenosyl-L-homocysteine + H(+). It functions in the pathway phospholipid metabolism; phosphatidylcholine biosynthesis; phosphocholine from phosphoethanolamine. With respect to regulation, feedback inhibition by phosphatidylcholine. Its function is as follows. Catalyzes the first step in the synthesis of phosphocholine by converting phosphoethanolamine into phospho-monomethylethanolamine (N-methylethanolamine phosphate). Phosphocholine is a precursor for phosphatidylcholine, a major component in membranes and a precursor itself in the production of glycoconjugates secreted by parasitic nematodes to avoid host immune responses. In Caenorhabditis elegans, this protein is Phosphoethanolamine N-methyltransferase 1.